Reading from the N-terminus, the 341-residue chain is Biotin synthase (341 aa).

A Radical SAM core domain is found at Asn-40–Ala-264. [4Fe-4S] cluster is bound by residues Cys-55, Cys-59, and Cys-62. Residues Cys-99, Cys-132, Cys-192, and Arg-262 each coordinate [2Fe-2S] cluster. Residues Ala-317–Ala-341 are disordered.

Belongs to the radical SAM superfamily. Biotin synthase family. As to quaternary structure, homodimer. [4Fe-4S] cluster serves as cofactor. [2Fe-2S] cluster is required as a cofactor.

The catalysed reaction is (4R,5S)-dethiobiotin + (sulfur carrier)-SH + 2 reduced [2Fe-2S]-[ferredoxin] + 2 S-adenosyl-L-methionine = (sulfur carrier)-H + biotin + 2 5'-deoxyadenosine + 2 L-methionine + 2 oxidized [2Fe-2S]-[ferredoxin]. It functions in the pathway cofactor biosynthesis; biotin biosynthesis; biotin from 7,8-diaminononanoate: step 2/2. Functionally, catalyzes the conversion of dethiobiotin (DTB) to biotin by the insertion of a sulfur atom into dethiobiotin via a radical-based mechanism. The polypeptide is Biotin synthase (Renibacterium salmoninarum (strain ATCC 33209 / DSM 20767 / JCM 11484 / NBRC 15589 / NCIMB 2235)).